The chain runs to 302 residues: Deoxyhypusine hydroxylase (302 aa).

The residue at position 1 (Met-1) is an N-acetylmethionine. HEAT-like PBS-type repeat units lie at residues 54–80 (LKHE…VLQD), 87–113 (VRHE…YSTD), 175–201 (ERYR…GLKC), 206–232 (FRHE…TLAR), and 239–265 (VRHE…YITD). 3 residues coordinate Fe cation: His-56, His-89, and Glu-90. The Fe cation site is built by His-208, His-241, and Glu-242.

It belongs to the deoxyhypusine hydroxylase family. Fe(2+) serves as cofactor.

It carries out the reaction [eIF5A protein]-deoxyhypusine + AH2 + O2 = [eIF5A protein]-hypusine + A + H2O. It participates in protein modification; eIF5A hypusination. Its function is as follows. Catalyzes the hydroxylation of the N(6)-(4-aminobutyl)-L-lysine intermediate produced by deoxyhypusine synthase/DHPS on a critical lysine of the eukaryotic translation initiation factor 5A/eIF-5A. This is the second step of the post-translational modification of that lysine into an unusual amino acid residue named hypusine. Hypusination is unique to mature eIF-5A factor and is essential for its function. The chain is Deoxyhypusine hydroxylase (Dohh) from Rattus norvegicus (Rat).